A 467-amino-acid polypeptide reads, in one-letter code: Dihydroorotase (467 aa).

Zn(2+) is bound by residues His-60 and His-62. Residues 62–64 (HFR) and Asn-94 each bind substrate. Zn(2+) contacts are provided by Glu-146, His-180, His-234, and Asp-313. The active site involves Asp-313. His-317 is a binding site for substrate. Residues 439–467 (KPGRGEFLEGSGKRSEEDEEENSEETGSD) are disordered. The span at 441–454 (GRGEFLEGSGKRSE) shows a compositional bias: basic and acidic residues. The span at 455–467 (EDEEENSEETGSD) shows a compositional bias: acidic residues.

It belongs to the metallo-dependent hydrolases superfamily. DHOase family. Class I DHOase subfamily. Zn(2+) serves as cofactor.

It carries out the reaction (S)-dihydroorotate + H2O = N-carbamoyl-L-aspartate + H(+). It participates in pyrimidine metabolism; UMP biosynthesis via de novo pathway; (S)-dihydroorotate from bicarbonate: step 3/3. Catalyzes the reversible cyclization of carbamoyl aspartate to dihydroorotate. This Methanosarcina acetivorans (strain ATCC 35395 / DSM 2834 / JCM 12185 / C2A) protein is Dihydroorotase.